The following is a 500-amino-acid chain: Maturase K (500 aa).

Belongs to the intron maturase 2 family. MatK subfamily.

It localises to the plastid. It is found in the chloroplast. In terms of biological role, usually encoded in the trnK tRNA gene intron. Probably assists in splicing its own and other chloroplast group II introns. This is Maturase K from Adiantum capillus-veneris (Maidenhair fern).